The chain runs to 96 residues: Putative defensin-like protein 236 (96 aa).

An N-terminal signal peptide occupies residues 1 to 23 (MKNATSLIIYCFLMFLLMNNVKG). 4 cysteine pairs are disulfide-bonded: Cys-31-Cys-93, Cys-41-Cys-70, Cys-49-Cys-83, and Cys-68-Cys-85.

It belongs to the DEFL family.

Its subcellular location is the secreted. The polypeptide is Putative defensin-like protein 236 (SCRL20) (Arabidopsis thaliana (Mouse-ear cress)).